The chain runs to 149 residues: Ribonuclease pancreatic (149 aa).

The first 25 residues, 1-25, serve as a signal peptide directing secretion; that stretch reads MGLEKSLILFPLLVLVLGWVQPSLA. The substrate site is built by lysine 32 and arginine 35. The active-site Proton acceptor is the histidine 37. Disulfide bonds link cysteine 51-cysteine 109, cysteine 65-cysteine 120, cysteine 83-cysteine 135, and cysteine 90-cysteine 97. Substrate-binding positions include 66–70, lysine 91, and arginine 110; that span reads KPVNT. The active-site Proton donor is the histidine 144.

It belongs to the pancreatic ribonuclease family. As to quaternary structure, monomer. Interacts with and forms tight 1:1 complexes with RNH1. Dimerization of two such complexes may occur. Interaction with RNH1 inhibits this protein. In terms of tissue distribution, pancreas.

It localises to the secreted. It catalyses the reaction an [RNA] containing cytidine + H2O = an [RNA]-3'-cytidine-3'-phosphate + a 5'-hydroxy-ribonucleotide-3'-[RNA].. It carries out the reaction an [RNA] containing uridine + H2O = an [RNA]-3'-uridine-3'-phosphate + a 5'-hydroxy-ribonucleotide-3'-[RNA].. Endonuclease that catalyzes the cleavage of RNA on the 3' side of pyrimidine nucleotides. Acts on single-stranded and double-stranded RNA. This Uranomys ruddi (White-bellied brush-furred rat) protein is Ribonuclease pancreatic (RNASE1).